Here is a 103-residue protein sequence, read N- to C-terminus: Protein IQ-DOMAIN 20 (103 aa).

Residues 10-22 (VVRRKLLRRSQSR) form a calmodulin-binding region. 2 consecutive IQ domains span residues 36–62 (EEIA…LKSL) and 63–87 (VKLQ…CMHA).

The protein belongs to the IQD family. In terms of assembly, interacts with calmodulin (CaM and CML) at the plasma membrane in a calcium ion Ca(2+)- independent manner, however, Ca(2+) seems to modulate calmodulin binding. Binds to multiple calmodulin (CaM) in the presence of Ca(2+) and CaM-like proteins.

It is found in the nucleus. Its subcellular location is the nucleolus. The protein resides in the cell membrane. May be involved in cooperative interactions with calmodulins or calmodulin-like proteins. Recruits calmodulin proteins to microtubules, thus being a potential scaffold in cellular signaling and trafficking. May associate with nucleic acids and regulate gene expression at the transcriptional or post-transcriptional level. In Arabidopsis thaliana (Mouse-ear cress), this protein is Protein IQ-DOMAIN 20.